The chain runs to 494 residues: Arp2/3 complex-activating protein rickA (494 aa).

Residues 312-494 (PLENNIPPPP…RNSQKPSFVR (183 aa)) are disordered. Over residues 317 to 357 (IPPPPPPPPPLPDNNIPPPPPPPPPLPDNNIPPPPPPPPMA) the composition is skewed to pro residues. The WH2 domain occupies 383–400 (DTSDLMREIAGPKKLKKV). The interval 421 to 454 (VNKPSGLESIFARRVAIEMSDSSSSESDSGNWSD) is central and acidic domains. Residues 440–456 (SDSSSSESDSGNWSDVS) are compositionally biased toward low complexity. A compositionally biased stretch (polar residues) spans 477–494 (THAQKINNRNSQKPSFVR).

The protein resides in the cell surface. In terms of biological role, recruits and activates the Arp2/3 complex, which in turn leads to actin polymerization, promoting Rickettsia motility during infection. The polypeptide is Arp2/3 complex-activating protein rickA (rickA) (Rickettsia rickettsii).